The primary structure comprises 99 residues: DNA-directed RNA polymerase subunit omega (99 aa).

This sequence belongs to the RNA polymerase subunit omega family. The RNAP catalytic core consists of 2 alpha, 1 beta, 1 beta' and 1 omega subunit. When a sigma factor is associated with the core the holoenzyme is formed, which can initiate transcription.

The catalysed reaction is RNA(n) + a ribonucleoside 5'-triphosphate = RNA(n+1) + diphosphate. Promotes RNA polymerase assembly. Latches the N- and C-terminal regions of the beta' subunit thereby facilitating its interaction with the beta and alpha subunits. The chain is DNA-directed RNA polymerase subunit omega from Xanthomonas axonopodis pv. citri (strain 306).